The chain runs to 430 residues: Retinoic acid receptor RXR-alpha-A (430 aa).

A compositionally biased stretch (low complexity) spans 1–20; it reads MHPSLLSPTSLGPSGSLHSP. Disordered stretches follow at residues 1–25 and 48–73; these read MHPSLLSPTSLGPSGSLHSPISTLS and ASPGVGYGPSISPQLNSHMNSVSSSE. The interval 1–99 is modulating; the sequence is MHPSLLSPTS…QPSGTPLSLT (99 aa). Residues 58–72 show a composition bias toward polar residues; sequence ISPQLNSHMNSVSSS. The nuclear receptor DNA-binding region spans 100–175; it reads KHICAICGDR…MGMKREAVQE (76 aa). 4 residues coordinate Zn(2+): Cys-103, Cys-106, Cys-120, and Cys-123. The NR C4-type zinc finger occupies 103–123; sequence CAICGDRSSGKHYGVYSCEGC. The nuclear localization signal stretch occupies residues 128-133; sequence KRTVRK. Positions 139, 145, 155, and 158 each coordinate Zn(2+). An NR C4-type zinc finger spans residues 139–158; it reads CRDNKDCVIDKRQRNRCQYC. Basic and acidic residues predominate over residues 174 to 186; sequence QEERQRAKERSEN. Residues 174–196 are disordered; the sequence is QEERQRAKERSENEVESTSSANE. A hinge region spans residues 176–192; it reads ERQRAKERSENEVESTS. Residues 195–426 enclose the NR LBD domain; the sequence is NEDMPVEKIL…TFLMEMLEAP (232 aa). Arg-284 and Ala-295 together coordinate 9-cis-retinoate. All-trans-retinoate contacts are provided by Arg-284 and Ala-295. Residues 316 to 336 form a required for nuclear export region; it reads RVLTELVSKMRDMQMDKTELG. The segment at 415-426 is AF-2; sequence IDTFLMEMLEAP.

This sequence belongs to the nuclear hormone receptor family. NR2 subfamily. As to quaternary structure, homodimer. Heterodimer; with a rar molecule. Binds DNA preferentially as a rar/rxr heterodimer.

The protein resides in the nucleus. Its function is as follows. Receptor for retinoic acid that acts as a transcription factor. Forms homo- or heterodimers with retinoic acid receptors (rars) and binds to target response elements in response to their ligands, all-trans or 9-cis retinoic acid, to regulate gene expression in various biological processes. The rar/rxr heterodimers bind to the retinoic acid response elements (RARE) composed of tandem 5'-AGGTCA-3' sites known as DR1-DR5 to regulate transcription. The high affinity ligand for rxrs is 9-cis retinoic acid. In the absence of ligand, the rar/rxr heterodimers associate with a multiprotein complex containing transcription corepressors that induce histone deacetylation, chromatin condensation and transcriptional suppression. On ligand binding, the corepressors dissociate from the receptors and coactivators are recruited leading to transcriptional activation. The polypeptide is Retinoic acid receptor RXR-alpha-A (Danio rerio (Zebrafish)).